The chain runs to 355 residues: 3-isopropylmalate dehydrogenase (355 aa).

Residues Arg98, Arg108, Arg132, and Asp223 each coordinate substrate. Mg(2+) contacts are provided by Asp223, Asp247, and Asp251. Position 283–295 (283–295 (GSAPDIAGQQKAD)) interacts with NAD(+).

The protein belongs to the isocitrate and isopropylmalate dehydrogenases family. LeuB type 2 subfamily. Homodimer. It depends on Mg(2+) as a cofactor. Mn(2+) is required as a cofactor.

The protein resides in the cytoplasm. It catalyses the reaction (2R,3S)-3-isopropylmalate + NAD(+) = 4-methyl-2-oxopentanoate + CO2 + NADH. It participates in amino-acid biosynthesis; L-leucine biosynthesis; L-leucine from 3-methyl-2-oxobutanoate: step 3/4. Catalyzes the oxidation of 3-carboxy-2-hydroxy-4-methylpentanoate (3-isopropylmalate) to 3-carboxy-4-methyl-2-oxopentanoate. The product decarboxylates to 4-methyl-2 oxopentanoate. This chain is 3-isopropylmalate dehydrogenase, found in Clavibacter sepedonicus (Clavibacter michiganensis subsp. sepedonicus).